A 189-amino-acid chain; its full sequence is Apolipoprotein D (189 aa).

A signal peptide spans 1-20 (MVMLLLLLSALAGLFGAAEG). The residue at position 21 (Gln21) is a Pyrrolidone carboxylic acid. 2 disulfides stabilise this stretch: Cys28–Cys134 and Cys61–Cys185. Residues Asn65 and Asn98 are each glycosylated (N-linked (GlcNAc...) asparagine).

Belongs to the calycin superfamily. Lipocalin family. In terms of assembly, homodimer.

It is found in the secreted. In terms of biological role, APOD occurs in the macromolecular complex with lecithin-cholesterol acyltransferase. It is probably involved in the transport and binding of bilin. Appears to be able to transport a variety of ligands in a number of different contexts. This chain is Apolipoprotein D (APOD), found in Macaca fascicularis (Crab-eating macaque).